We begin with the raw amino-acid sequence, 445 residues long: Phosphoglucosamine mutase (445 aa).

The active-site Phosphoserine intermediate is Ser102. 4 residues coordinate Mg(2+): Ser102, Asp241, Asp243, and Asp245. A Phosphoserine modification is found at Ser102.

This sequence belongs to the phosphohexose mutase family. Mg(2+) serves as cofactor. Post-translationally, activated by phosphorylation.

The catalysed reaction is alpha-D-glucosamine 1-phosphate = D-glucosamine 6-phosphate. Catalyzes the conversion of glucosamine-6-phosphate to glucosamine-1-phosphate. The protein is Phosphoglucosamine mutase of Rhodococcus opacus (strain B4).